We begin with the raw amino-acid sequence, 611 residues long: Immediate-early protein 3 (611 aa).

Disordered regions lie at residues 119 to 155 (TASH…QRLD) and 180 to 383 (EEEY…SGSD). Over residues 138-151 (HSEKKAKKHKNKQR) the composition is skewed to basic residues. Positions 141-147 (KKAKKHK) match the Nuclear localization signal motif. Positions 198–213 (HFDERSPSRSSSDHGG) are enriched in basic and acidic residues. The span at 230–240 (SEDEDDEDDER) shows a compositional bias: acidic residues. Over residues 260–277 (HGGSHSSRSSIKSSGSGS) the composition is skewed to low complexity. The Nuclear localization signal motif lies at 279 to 285 (RHHHKRK). The span at 341–376 (PPSSGSNSNKHSSSSGGSTSSSHKKQQQQQAPSKKP) shows a compositional bias: low complexity.

Its subcellular location is the host nucleus. Strong transcriptional activator of the E1 promoter, shows an autoregulatory function by repression of the IE1/IE3 promoter. The IE1 protein has some additive effect on the trans-activating properties of the IE3 protein. The polypeptide is Immediate-early protein 3 (IE1) (Mus musculus (Mouse)).